The following is a 444-amino-acid chain: Guanosine nucleotide diphosphate dissociation inhibitor 2 (444 aa).

The protein belongs to the Rab GDI family. As to expression, expressed in roots and floral buds.

Its function is as follows. Regulates the GDP/GTP exchange reaction of most RAB proteins by inhibiting the dissociation of GDP from them, and the subsequent binding of GTP. The chain is Guanosine nucleotide diphosphate dissociation inhibitor 2 (GDI2) from Arabidopsis thaliana (Mouse-ear cress).